A 158-amino-acid chain; its full sequence is S-ribosylhomocysteine lyase (158 aa).

3 residues coordinate Fe cation: His-54, His-58, and Cys-124.

It belongs to the LuxS family. Homodimer. The cofactor is Fe cation.

The catalysed reaction is S-(5-deoxy-D-ribos-5-yl)-L-homocysteine = (S)-4,5-dihydroxypentane-2,3-dione + L-homocysteine. Involved in the synthesis of autoinducer 2 (AI-2) which is secreted by bacteria and is used to communicate both the cell density and the metabolic potential of the environment. The regulation of gene expression in response to changes in cell density is called quorum sensing. Catalyzes the transformation of S-ribosylhomocysteine (RHC) to homocysteine (HC) and 4,5-dihydroxy-2,3-pentadione (DPD). This is S-ribosylhomocysteine lyase from Limosilactobacillus reuteri (Lactobacillus reuteri).